A 560-amino-acid polypeptide reads, in one-letter code: Interferon alpha/beta receptor 1 (560 aa).

The first 24 residues, 1 to 24 (MLGLLGATTLMLVAGAPWVLPAGG), serve as a signal peptide directing secretion. Residues 25 to 437 (ADLRSPENVV…EKTKPGSTSQ (413 aa)) are Extracellular-facing. Fibronectin type-III domains follow at residues 29–125 (SPEN…FQEA), 133–224 (HLEA…INTT), 231–329 (SPEN…TEMQ), and 333–433 (FPPV…TKPG). An N-linked (GlcNAc...) asparagine glycan is attached at N55. C76 and C84 are oxidised to a cystine. N-linked (GlcNAc...) asparagine glycosylation is found at N85, N108, and N172. C199 and C220 are joined by a disulfide. N-linked (GlcNAc...) asparagine glycans are attached at residues N222, N249, and N254. C283 and C291 are disulfide-bonded. 3 N-linked (GlcNAc...) asparagine glycosylation sites follow: N313, N377, and N417. A disulfide bridge links C404 with C427. A helical membrane pass occupies residues 438–458 (AWLIAGILSAILLFPAVFYGV). The Cytoplasmic segment spans residues 459–560 (KVVSRCINYV…GEEILRQAAV (102 aa)). A lipid anchor (S-palmitoyl cysteine) is attached at C464. 2 positions are modified to phosphotyrosine; by TYK2: Y467 and Y482. Residues 492-501 (LLSTSEEQTE) form an important for interaction with TYK2 region. Phosphoserine is present on residues S496 and S536. The interval 520–560 (QIDDNHSRCSSQTNRDSGVYSNEDENSGSKIGEEILRQAAV) is disordered. Polar residues predominate over residues 527 to 539 (RCSSQTNRDSGVY). The span at 550–560 (IGEEILRQAAV) shows a compositional bias: basic and acidic residues.

The protein belongs to the type II cytokine receptor family. Heterodimer with IFNAR2; forming the receptor for type I interferon. Interacts with TYK2. Interacts with STAT1 and STAT2; the interaction requires its phosphorylation at Tyr-482. Interacts (serine-phosphorylated form) with FBXW11, the substrate recognition component of a SCF (SKP1-CUL1-F-box protein) E3 ubiquitin-protein ligase complex. Interacts with SHMT2; this promotes interaction with ABRAXAS2 and the BRISC complex. Interacts with TRIM10; this interaction prevents association between IFNAR1 and TYK2. In terms of processing, ubiquitinated, leading to its internalization and degradation. Polyubiquitinated via 'Lys-48'-linked and 'Lys-63'-linked ubiquitin chains, leading to receptor internalization and lysosomal degradation. The 'Lys-63'-linked ubiquitin chains are cleaved off by the BRISC complex. Post-translationally, phosphorylated on tyrosine residues in response to interferon-binding: phosphorylation by TYK2 tyrosine kinase creates docking sites for STAT proteins. Phosphorylated on serine residues in response to interferon binding; this promotes interaction with FBXW11 and ubiquitination. Palmitoylation at Cys-464 is required for the activation of STAT1 and STAT2.

The protein localises to the cell membrane. The protein resides in the late endosome. It is found in the lysosome. In terms of biological role, together with IFNAR2, forms the heterodimeric receptor for type I interferons (including interferons alpha, beta, epsilon, omega and kappa). Type I interferon binding activates the JAK-STAT signaling cascade, resulting in transcriptional activation or repression of interferon-regulated genes that encode the effectors of the interferon response. Mechanistically, type I interferon-binding brings the IFNAR1 and IFNAR2 subunits into close proximity with one another, driving their associated Janus kinases (JAKs) (TYK2 bound to IFNAR1 and JAK1 bound to IFNAR2) to cross-phosphorylate one another. The activated kinases phosphorylate specific tyrosine residues on the intracellular domains of IFNAR1 and IFNAR2, forming docking sites for the STAT transcription factors. STAT proteins are then phosphorylated by the JAKs, promoting their translocation into the nucleus to regulate expression of interferon-regulated genes. Can also act independently of IFNAR2: form an active IFNB1 receptor by itself and activate a signaling cascade that does not involve activation of the JAK-STAT pathway. This Sus scrofa (Pig) protein is Interferon alpha/beta receptor 1 (IFNAR1).